The following is a 369-amino-acid chain: 4-hydroxy-3-methylbut-2-en-1-yl diphosphate synthase (flavodoxin) (369 aa).

Residues cysteine 270, cysteine 273, cysteine 305, and glutamate 312 each contribute to the [4Fe-4S] cluster site.

The protein belongs to the IspG family. [4Fe-4S] cluster is required as a cofactor.

It carries out the reaction (2E)-4-hydroxy-3-methylbut-2-enyl diphosphate + oxidized [flavodoxin] + H2O + 2 H(+) = 2-C-methyl-D-erythritol 2,4-cyclic diphosphate + reduced [flavodoxin]. It participates in isoprenoid biosynthesis; isopentenyl diphosphate biosynthesis via DXP pathway; isopentenyl diphosphate from 1-deoxy-D-xylulose 5-phosphate: step 5/6. In terms of biological role, converts 2C-methyl-D-erythritol 2,4-cyclodiphosphate (ME-2,4cPP) into 1-hydroxy-2-methyl-2-(E)-butenyl 4-diphosphate. This Pseudomonas syringae pv. tomato (strain ATCC BAA-871 / DC3000) protein is 4-hydroxy-3-methylbut-2-en-1-yl diphosphate synthase (flavodoxin).